The sequence spans 570 residues: MANPKEKTAMCLVNELARFNRVQPQYKLLNERGPAHSKMFSVQLSLGEQTWESEGSSIKKAQQAVANKALTESTLPKPVQKPPKSNVNNNPGSITPTVELNGLAMKRGEPAIYRPLDPKPFPNYRANYNFRGMYNQRYHCPVPKIFYVQLTVGNNEFFGEGKTRQAARHNAAMKALQALQNEPIPERSPQNGESGKDVDDDKDANKSEISLVFEIALKRNMPVSFEVIKESGPPHMKSFVTRVSVGEFSAEGEGNSKKLSKKRAATTVLQELKKLPPLPVVEKPKLFFKKRPKTIVKAGPEYGQGMNPISRLAQIQQAKKEKEPDYVLLSERGMPRRREFVMQVKVGNEVATGTGPNKKIAKKNAAEAMLLQLGYKASTNLQDQLEKTGENKGWSGPKPGFPEPTNNTPKGILHLSPDVYQEMEASRHKVISGTTLGYLSPKDMNQPSSSFFSISPTSNSSATIARELLMNGTSSTAEAIGLKGSSPTPPCSPVQPSKQLEYLARIQGFQAALSALKQFSEQGLDPIDGAMNIEKGSLEKQAKHLREKADNNQAPPGSIAQDCKKSNSAV.

The region spanning 8–75 (TAMCLVNELA…ANKALTESTL (68 aa)) is the DRBM 1 domain. Disordered stretches follow at residues 71–94 (TESTLPKPVQKPPKSNVNNNPGSI) and 181–203 (NEPIPERSPQNGESGKDVDDDKD). The segment covering 83–94 (PKSNVNNNPGSI) has biased composition (polar residues). The 87-residue stretch at 95–181 (TPTVELNGLA…AMKALQALQN (87 aa)) folds into the DRBM 2 domain. Phosphoserine is present on serine 188. Basic and acidic residues predominate over residues 194–203 (SGKDVDDDKD). DRBM domains follow at residues 207–274 (SEIS…ELKK) and 307–375 (NPIS…QLGY). 2 consecutive short sequence motifs (nuclear localization signal) follow at residues 273-291 (KKLPPLPVVEKPKLFFKKR) and 373-412 (LGYKASTNLQDQLEKTGENKGWSGPKPGFPEPTNNTPKGI). The segment at 381–570 (LQDQLEKTGE…QDCKKSNSAV (190 aa)) is required for dendritic transport. The disordered stretch occupies residues 387–409 (KTGENKGWSGPKPGFPEPTNNTP). Serine 395 bears the Phosphoserine mark. Phosphothreonine is present on threonine 405. Serine 416, serine 426, serine 440, serine 455, and serine 492 each carry phosphoserine. Residues 528 to 570 (DGAMNIEKGSLEKQAKHLREKADNNQAPPGSIAQDCKKSNSAV) form a disordered region. Positions 536 to 550 (GSLEKQAKHLREKAD) are enriched in basic and acidic residues.

Interacts with the exportin XPO5. This requires RNA and RAN bound to GTP. Interacts with microtubules. Isoform 2 and isoform 3 may also interact with ribosomes, and this association is independent of translation. Identified in a mRNP complex, at least composed of DHX9, DDX3X, ELAVL1, HNRNPU, IGF2BP1, ILF3, PABPC1, PCBP2, PTBP2, STAU1, STAU2, SYNCRIP and YBX1. Interacts with TRIM71 (via NHL repeats) in an RNA-dependent manner.

Its subcellular location is the cytoplasm. The protein resides in the nucleus. It is found in the nucleolus. It localises to the endoplasmic reticulum. Its function is as follows. RNA-binding protein required for the microtubule-dependent transport of neuronal RNA from the cell body to the dendrite. As protein synthesis occurs within the dendrite, the localization of specific mRNAs to dendrites may be a prerequisite for neurite outgrowth and plasticity at sites distant from the cell body. This is Double-stranded RNA-binding protein Staufen homolog 2 (STAU2) from Homo sapiens (Human).